Here is a 388-residue protein sequence, read N- to C-terminus: uncharacterized protein (388 aa).

4 residues coordinate [4Fe-4S] cluster: cysteine 18, cysteine 24, cysteine 27, and cysteine 99. Positions 212, 262, and 313 each coordinate S-adenosyl-L-methionine. Catalysis depends on cysteine 343, which acts as the Nucleophile.

It belongs to the class I-like SAM-binding methyltransferase superfamily. RNA M5U methyltransferase family.

This is an uncharacterized protein from Bdellovibrio bacteriovorus (strain ATCC 15356 / DSM 50701 / NCIMB 9529 / HD100).